The primary structure comprises 145 residues: Putative pre-16S rRNA nuclease (145 aa).

This sequence belongs to the YqgF nuclease family.

The protein localises to the cytoplasm. Could be a nuclease involved in processing of the 5'-end of pre-16S rRNA. The protein is Putative pre-16S rRNA nuclease of Limosilactobacillus fermentum (strain NBRC 3956 / LMG 18251) (Lactobacillus fermentum).